A 295-amino-acid chain; its full sequence is 4-hydroxy-tetrahydrodipicolinate synthase (295 aa).

T48 provides a ligand contact to pyruvate. Y136 (proton donor/acceptor) is an active-site residue. The Schiff-base intermediate with substrate role is filled by K164. I206 is a binding site for pyruvate.

Belongs to the DapA family. Homotetramer; dimer of dimers.

The protein resides in the cytoplasm. It catalyses the reaction L-aspartate 4-semialdehyde + pyruvate = (2S,4S)-4-hydroxy-2,3,4,5-tetrahydrodipicolinate + H2O + H(+). It participates in amino-acid biosynthesis; L-lysine biosynthesis via DAP pathway; (S)-tetrahydrodipicolinate from L-aspartate: step 3/4. Its function is as follows. Catalyzes the condensation of (S)-aspartate-beta-semialdehyde [(S)-ASA] and pyruvate to 4-hydroxy-tetrahydrodipicolinate (HTPA). This chain is 4-hydroxy-tetrahydrodipicolinate synthase, found in Actinobacillus pleuropneumoniae serotype 5b (strain L20).